Consider the following 332-residue polypeptide: Adenosine deaminase (332 aa).

Zn(2+) contacts are provided by histidine 12 and histidine 14. Residues histidine 14, aspartate 16, and glycine 170 each coordinate substrate. Histidine 197 serves as a coordination point for Zn(2+). Glutamate 200 acts as the Proton donor in catalysis. Aspartate 278 contributes to the Zn(2+) binding site.

It belongs to the metallo-dependent hydrolases superfamily. Adenosine and AMP deaminases family. Adenosine deaminase subfamily. Zn(2+) serves as cofactor.

The enzyme catalyses adenosine + H2O + H(+) = inosine + NH4(+). The catalysed reaction is 2'-deoxyadenosine + H2O + H(+) = 2'-deoxyinosine + NH4(+). In terms of biological role, catalyzes the hydrolytic deamination of adenosine and 2-deoxyadenosine. The polypeptide is Adenosine deaminase (Clostridium perfringens (strain SM101 / Type A)).